The sequence spans 158 residues: Large ribosomal subunit protein uL30 (158 aa).

Belongs to the universal ribosomal protein uL30 family. Part of the 50S ribosomal subunit.

The sequence is that of Large ribosomal subunit protein uL30 from Sulfurisphaera tokodaii (strain DSM 16993 / JCM 10545 / NBRC 100140 / 7) (Sulfolobus tokodaii).